The sequence spans 777 residues: Dynamin-like protein ARC5 (777 aa).

The Dynamin-type G domain maps to 45 to 343 (PFEAPAVLVV…LWKRYKESVP (299 aa)). The segment at 55–62 (GQQTDGKS) is G1 motif. 55-62 (GQQTDGKS) is a binding site for GTP. The interval 81–83 (KTR) is G2 motif. The interval 160–163 (DTPG) is G3 motif. GTP is bound by residues 160–164 (DTPGL) and 231–234 (TKLD). The interval 231–234 (TKLD) is G4 motif. The interval 265–268 (SPFF) is G5 motif. 2 coiled-coil regions span residues 300–320 (EDIASLEKKLGRLLTKQEKSR) and 728–765 (NLRQSLDQKKRSTEIELRRIKRIKEKFRVMNEKLNSHE).

This sequence belongs to the TRAFAC class dynamin-like GTPase superfamily. Dynamin/Fzo/YdjA family. As to quaternary structure, forms a homodimer and heterodimers with DRP3A and DRP3B on peroxisomes. Also interacts with FIS1A (but not FIS1B) and PEX11 proteins (PEX11A, PEX11B, PEX11C, PEX11D and PEX11E) on peroxisomes. Interacts with PDV1 and PDV2. In terms of processing, stabilized at the plastid outer envelope membranes (OEMs) in the constriction site when in complex with GTP, but destabilized after conversion of GTP into GDP leading to turnover with a cytosolic pool.

Its subcellular location is the cytoplasm. It is found in the plastid. The protein localises to the chloroplast outer membrane. It localises to the peroxisome. The protein resides in the cytosol. It carries out the reaction GTP + H2O = GDP + phosphate + H(+). Its activity is regulated as follows. GTPase activity is repressed by PDV2 thus increasing stability at the plastid outer envelope membranes (OEMs) periphery. Mechanochemical GTPase component of both plastid and peroxisome division machinery. Required for the last steps of plastid division specifically in mesophyll-cell, when the narrow isthmus breaks, facilitating the separation of the daughter plastids. Necessary for peroxisome activities. Seems to influence stromule (stroma-filled tubular extensions of the plastid envelope membrane) length and frequency. The protein is Dynamin-like protein ARC5 of Arabidopsis thaliana (Mouse-ear cress).